We begin with the raw amino-acid sequence, 378 residues long: Holliday junction branch migration complex subunit RuvB 1 (378 aa).

Polar residues predominate over residues 1–12; it reads MAIISSRDTGQN. A disordered region spans residues 1 to 62; it reads MAIISSRDTG…PGEAQEESLR (62 aa). A large ATPase domain (RuvB-L) region spans residues 13-222; that stretch reads AEGPKRRQQK…FGHVQRLRFY (210 aa). ATP is bound by residues Leu-61, Arg-62, Gly-103, Lys-106, Thr-107, Thr-108, 169–171, Arg-212, Tyr-222, and Arg-259; that span reads EDF. Thr-107 contacts Mg(2+). Positions 223–293 are small ATPAse domain (RuvB-S); the sequence is EPHELVQIVL…VAAAALELFQ (71 aa). The interval 296–378 is head domain (RuvB-H); the sequence is PMGLDWIDRK…EAQSPLPLWS (83 aa). Positions 351 and 356 each coordinate DNA.

It belongs to the RuvB family. In terms of assembly, homohexamer. Forms an RuvA(8)-RuvB(12)-Holliday junction (HJ) complex. HJ DNA is sandwiched between 2 RuvA tetramers; dsDNA enters through RuvA and exits via RuvB. An RuvB hexamer assembles on each DNA strand where it exits the tetramer. Each RuvB hexamer is contacted by two RuvA subunits (via domain III) on 2 adjacent RuvB subunits; this complex drives branch migration. In the full resolvosome a probable DNA-RuvA(4)-RuvB(12)-RuvC(2) complex forms which resolves the HJ.

It localises to the cytoplasm. The enzyme catalyses ATP + H2O = ADP + phosphate + H(+). In terms of biological role, the RuvA-RuvB-RuvC complex processes Holliday junction (HJ) DNA during genetic recombination and DNA repair, while the RuvA-RuvB complex plays an important role in the rescue of blocked DNA replication forks via replication fork reversal (RFR). RuvA specifically binds to HJ cruciform DNA, conferring on it an open structure. The RuvB hexamer acts as an ATP-dependent pump, pulling dsDNA into and through the RuvAB complex. RuvB forms 2 homohexamers on either side of HJ DNA bound by 1 or 2 RuvA tetramers; 4 subunits per hexamer contact DNA at a time. Coordinated motions by a converter formed by DNA-disengaged RuvB subunits stimulates ATP hydrolysis and nucleotide exchange. Immobilization of the converter enables RuvB to convert the ATP-contained energy into a lever motion, pulling 2 nucleotides of DNA out of the RuvA tetramer per ATP hydrolyzed, thus driving DNA branch migration. The RuvB motors rotate together with the DNA substrate, which together with the progressing nucleotide cycle form the mechanistic basis for DNA recombination by continuous HJ branch migration. Branch migration allows RuvC to scan DNA until it finds its consensus sequence, where it cleaves and resolves cruciform DNA. This is Holliday junction branch migration complex subunit RuvB 1 from Synechococcus sp. (strain JA-3-3Ab) (Cyanobacteria bacterium Yellowstone A-Prime).